We begin with the raw amino-acid sequence, 382 residues long: 1-deoxy-D-xylulose 5-phosphate reductoisomerase (382 aa).

NADPH is bound by residues threonine 10, glycine 11, serine 12, isoleucine 13, asparagine 38, and asparagine 120. Lysine 121 provides a ligand contact to 1-deoxy-D-xylulose 5-phosphate. Residue glutamate 122 coordinates NADPH. Residue aspartate 146 participates in Mn(2+) binding. Positions 147, 148, 172, and 195 each coordinate 1-deoxy-D-xylulose 5-phosphate. Glutamate 148 provides a ligand contact to Mn(2+). Glycine 201 lines the NADPH pocket. 4 residues coordinate 1-deoxy-D-xylulose 5-phosphate: serine 208, asparagine 213, lysine 214, and glutamate 217. Glutamate 217 provides a ligand contact to Mn(2+).

This sequence belongs to the DXR family. Mg(2+) is required as a cofactor. Requires Mn(2+) as cofactor.

The enzyme catalyses 2-C-methyl-D-erythritol 4-phosphate + NADP(+) = 1-deoxy-D-xylulose 5-phosphate + NADPH + H(+). It participates in isoprenoid biosynthesis; isopentenyl diphosphate biosynthesis via DXP pathway; isopentenyl diphosphate from 1-deoxy-D-xylulose 5-phosphate: step 1/6. Its function is as follows. Catalyzes the NADPH-dependent rearrangement and reduction of 1-deoxy-D-xylulose-5-phosphate (DXP) to 2-C-methyl-D-erythritol 4-phosphate (MEP). In Caldanaerobacter subterraneus subsp. tengcongensis (strain DSM 15242 / JCM 11007 / NBRC 100824 / MB4) (Thermoanaerobacter tengcongensis), this protein is 1-deoxy-D-xylulose 5-phosphate reductoisomerase.